The primary structure comprises 415 residues: Magnesium-chelatase subunit ChlI, chloroplastic (415 aa).

A chloroplast-targeting transit peptide spans 1–67 (MASAFSPATA…APSATQQEAK (67 aa)). 2 disulfides stabilise this stretch: Cys93-Cys184 and Cys345-Cys387.

Belongs to the Mg-chelatase subunits D/I family. As to quaternary structure, the magnesium chelatase complex is a heterotrimer consisting of subunits CHLI, CHLD and CHLH.

Its subcellular location is the plastid. The protein localises to the chloroplast. It carries out the reaction protoporphyrin IX + Mg(2+) + ATP + H2O = Mg-protoporphyrin IX + ADP + phosphate + 3 H(+). Its pathway is porphyrin-containing compound metabolism; chlorophyll biosynthesis. Redox regulation; active in reducing conditions, inactive in oxidizing conditions. Thioredoxins f and m mediate the reversible reductive activation of oxidized CHLI. Involved in chlorophyll biosynthesis. Catalyzes the insertion of magnesium ion into protoporphyrin IX to yield Mg-protoporphyrin IX. The reaction takes place in two steps, with an ATP-dependent activation followed by an ATP-dependent chelation step. The sequence is that of Magnesium-chelatase subunit ChlI, chloroplastic (CHLI) from Oryza sativa subsp. japonica (Rice).